A 229-amino-acid polypeptide reads, in one-letter code: MSLLAQLDQKIAANGGLIVSCQPVPDSPLDKPEIVAAMALAAEQAGAVAIRIEGVANLQATRAVVSVPIIGIVKRDLEDSPVRITAYIEDVDALAQAGADIIAIDGTDRPRPVPVETLLARIHHHGLLAMTDCSTPEDGLACQKLGAEIIGTTLSGYTTPETPEEPDLTLVKRLSDAGCRVIAEGRYNTPAQAADAMRHGAWAVTVGSAITRLEHICQWYNTAMKKAVL.

The protein belongs to the NanE family.

It catalyses the reaction an N-acyl-D-glucosamine 6-phosphate = an N-acyl-D-mannosamine 6-phosphate. The protein operates within amino-sugar metabolism; N-acetylneuraminate degradation; D-fructose 6-phosphate from N-acetylneuraminate: step 3/5. Converts N-acetylmannosamine-6-phosphate (ManNAc-6-P) to N-acetylglucosamine-6-phosphate (GlcNAc-6-P). The chain is Putative N-acetylmannosamine-6-phosphate 2-epimerase from Escherichia coli O157:H7.